The chain runs to 109 residues: Large ribosomal subunit protein eL42 (109 aa).

The interval 23–53 is disordered; the sequence is VSQYKKSKESTHAQGRRRYDMKQSGFGGQTK. A compositionally biased stretch (basic and acidic residues) spans 28-43; it reads KSKESTHAQGRRRYDM.

It belongs to the eukaryotic ribosomal protein eL42 family.

Its subcellular location is the cytoplasm. This chain is Large ribosomal subunit protein eL42 (RPL36A), found in Tetrahymena thermophila (strain SB210).